The chain runs to 207 residues: Small ribosomal subunit protein uS4 (207 aa).

The S4 RNA-binding domain occupies 96 to 156 (RRLDNVVYRL…EKFKTSSFIA (61 aa)).

It belongs to the universal ribosomal protein uS4 family. Part of the 30S ribosomal subunit. Contacts protein S5. The interaction surface between S4 and S5 is involved in control of translational fidelity.

In terms of biological role, one of the primary rRNA binding proteins, it binds directly to 16S rRNA where it nucleates assembly of the body of the 30S subunit. Its function is as follows. With S5 and S12 plays an important role in translational accuracy. In Leptospira interrogans serogroup Icterohaemorrhagiae serovar copenhageni (strain Fiocruz L1-130), this protein is Small ribosomal subunit protein uS4.